The following is a 269-amino-acid chain: 1-(5-phosphoribosyl)-5-[(5-phosphoribosylamino)methylideneamino] imidazole-4-carboxamide isomerase (269 aa).

Asp10 serves as the catalytic Proton acceptor. Asp132 (proton donor) is an active-site residue.

This sequence belongs to the HisA/HisF family.

It localises to the cytoplasm. It catalyses the reaction 1-(5-phospho-beta-D-ribosyl)-5-[(5-phospho-beta-D-ribosylamino)methylideneamino]imidazole-4-carboxamide = 5-[(5-phospho-1-deoxy-D-ribulos-1-ylimino)methylamino]-1-(5-phospho-beta-D-ribosyl)imidazole-4-carboxamide. It participates in amino-acid biosynthesis; L-histidine biosynthesis; L-histidine from 5-phospho-alpha-D-ribose 1-diphosphate: step 4/9. The sequence is that of 1-(5-phosphoribosyl)-5-[(5-phosphoribosylamino)methylideneamino] imidazole-4-carboxamide isomerase from Xylella fastidiosa (strain M12).